The following is a 251-amino-acid chain: Cell division protein ZapD (251 aa).

The protein belongs to the ZapD family. Interacts with FtsZ.

The protein localises to the cytoplasm. Its function is as follows. Cell division factor that enhances FtsZ-ring assembly. Directly interacts with FtsZ and promotes bundling of FtsZ protofilaments, with a reduction in FtsZ GTPase activity. The sequence is that of Cell division protein ZapD from Burkholderia ambifaria (strain MC40-6).